An 895-amino-acid chain; its full sequence is MILLAVLFLCFFSSYSASVKGHTTGLSLNNERLYKLTYSTEVFLDGGKGKLKDSVGYRISSDVDVVLLWRNPDGDDDQLIQVTITAVNVENVNQQRGEKSIFKGKTTPKIIGKDNLEALQRPVLLHLVRGKVKEFYSYENEPVGIENLKRGLASLFQMQLSSGTTNEVDISGDCKVTYQAQQDKVVKTKALDTCKIERSGFTTVNQVLGVSSKATSVTTYKIEDSFVTAVHAEETRDFSLNFLQAIAGKIVSKQKLELKTTEAGPRMVPGKQVAGVIKALDSKYTAIPIVGQVLQSACQGCPSLAEHWQSIRKHLEPENLSNAKAVSSFLAFIQHLRTARREEILQILKAEKKEVLPQLVDAVTSAQTPDSLEAILDFLDFKSDSSIVLQERFLYACGFASHPDEELLRALLSKFKGSFASNDIRETVMIIIGALVRKLCQNEGCKLKAVVEAKKLILGGLEKPEKKEDTTMYLLALKNALLPEGIPLLLKYAEAGEGPVSHLATTVLQRYDVSFITDEVKKTLNRIYHQNRKIHEKTVRTTAAAVILKSNPSYMDVKNILLSIGELPKEMNKYMLTFVRDILNFEMPSSKMIRRVLKEMVAHNYDRFSKSGSSSAYTGYIERSPHAASTYSLDMLYSGSGILRRSNLNVFQYLGKAGLHGSQVVIEAQGLESLIAATPDEGEENLDSYAGMSAILFDVQLRPVTFFNGYSDLMSKMLSASGDPVSVVKGLILLIDHSQDIQLQSGLKANMEIQGGLAIDISGSMEFSLWYRESKTRVKNRVAVVIDSAVTVDSSFVKAGLESRAETEAGLEFISTVQFSQYPFLVCMQMDRAEAPFRQFETKYERLSTGRGYVSRRRKESLVSGYELPLHQENSEMCNMVFPPQPESDNSGGWF.

Positions 1-18 (MILLAVLFLCFFSSYSAS) are cleaved as a signal peptide. The Vitellogenin domain maps to 28–659 (LNNERLYKLT…VFQYLGKAGL (632 aa)). The cysteines at positions 174 and 194 are disulfide-linked.

In terms of assembly, heterodimer; heterodimerizes with the protein disulfide isomerase (P4HB/PDI). Interacts with APOB. Interacts with PRAP1.

The protein resides in the endoplasmic reticulum. It is found in the golgi apparatus. The enzyme catalyses a 1,2-diacyl-sn-glycero-3-phosphocholine(in) = a 1,2-diacyl-sn-glycero-3-phosphocholine(out). It carries out the reaction a 1,2-diacyl-sn-glycero-3-phosphoethanolamine(in) = a 1,2-diacyl-sn-glycero-3-phosphoethanolamine(out). The catalysed reaction is a cholesterol ester(in) = a cholesterol ester(out). It catalyses the reaction a triacyl-sn-glycerol(in) = a triacyl-sn-glycerol(out). Its function is as follows. Catalyzes the transport of triglyceride, cholesteryl ester, and phospholipid between phospholipid surfaces. Required for the assembly and secretion of plasma lipoproteins that contain apolipoprotein B. May be involved in regulating cholesteryl ester biosynthesis in cells that produce lipoproteins. The protein is Microsomal triglyceride transfer protein large subunit (MTTP) of Mesocricetus auratus (Golden hamster).